The primary structure comprises 319 residues: Ribosomal RNA small subunit methyltransferase H (319 aa).

S-adenosyl-L-methionine contacts are provided by residues 38–40 (GGH), Asp58, Phe82, Asp104, and Gln111.

This sequence belongs to the methyltransferase superfamily. RsmH family.

It localises to the cytoplasm. It catalyses the reaction cytidine(1402) in 16S rRNA + S-adenosyl-L-methionine = N(4)-methylcytidine(1402) in 16S rRNA + S-adenosyl-L-homocysteine + H(+). Functionally, specifically methylates the N4 position of cytidine in position 1402 (C1402) of 16S rRNA. This is Ribosomal RNA small subunit methyltransferase H from Histophilus somni (strain 129Pt) (Haemophilus somnus).